Reading from the N-terminus, the 214-residue chain is Orotate phosphoribosyltransferase (214 aa).

5-phospho-alpha-D-ribose 1-diphosphate is bound by residues arginine 125, lysine 126, lysine 129, histidine 131, and 151–159; that span reads EDTSTTGNS. Residues threonine 155 and arginine 183 each coordinate orotate.

Belongs to the purine/pyrimidine phosphoribosyltransferase family. PyrE subfamily. As to quaternary structure, homodimer. Mg(2+) serves as cofactor.

The enzyme catalyses orotidine 5'-phosphate + diphosphate = orotate + 5-phospho-alpha-D-ribose 1-diphosphate. The protein operates within pyrimidine metabolism; UMP biosynthesis via de novo pathway; UMP from orotate: step 1/2. In terms of biological role, catalyzes the transfer of a ribosyl phosphate group from 5-phosphoribose 1-diphosphate to orotate, leading to the formation of orotidine monophosphate (OMP). In Tropheryma whipplei (strain Twist) (Whipple's bacillus), this protein is Orotate phosphoribosyltransferase.